Reading from the N-terminus, the 96-residue chain is Large ribosomal subunit protein bL21 (96 aa).

Belongs to the bacterial ribosomal protein bL21 family. In terms of assembly, part of the 50S ribosomal subunit. Contacts protein L20.

This protein binds to 23S rRNA in the presence of protein L20. The polypeptide is Large ribosomal subunit protein bL21 (Sulfurihydrogenibium sp. (strain YO3AOP1)).